A 201-amino-acid polypeptide reads, in one-letter code: MTNKLLSIKIADPYAEAFFQLSLSLYIKNNDPDLFYQLIFDIQDFLKLLKETPELDNFLKNPLNSNILKKNILNKIIENKFNLQTINFLNLLIDKKRIDTIQTIGKIFLEKAYEFVCIKFVEVWSTIELSQKQQENLIQKINILLGPIFSEPSVQFYKIQLTLMLDTNLLGGLIIKMGSKIIDLSLRNELQQLGKKLDITI.

It belongs to the ATPase delta chain family. F-type ATPases have 2 components, F(1) - the catalytic core - and F(0) - the membrane proton channel. F(1) has five subunits: alpha(3), beta(3), gamma(1), delta(1), epsilon(1). CF(0) has four main subunits: a(1), b(1), b'(1) and c(10-14). The alpha and beta chains form an alternating ring which encloses part of the gamma chain. F(1) is attached to F(0) by a central stalk formed by the gamma and epsilon chains, while a peripheral stalk is formed by the delta, b and b' chains.

It is found in the plastid. The protein localises to the chloroplast thylakoid membrane. In terms of biological role, f(1)F(0) ATP synthase produces ATP from ADP in the presence of a proton or sodium gradient. F-type ATPases consist of two structural domains, F(1) containing the extramembraneous catalytic core and F(0) containing the membrane proton channel, linked together by a central stalk and a peripheral stalk. During catalysis, ATP synthesis in the catalytic domain of F(1) is coupled via a rotary mechanism of the central stalk subunits to proton translocation. This protein is part of the stalk that links CF(0) to CF(1). It either transmits conformational changes from CF(0) to CF(1) or is implicated in proton conduction. This Vaucheria litorea (Yellow-green alga) protein is ATP synthase subunit delta, chloroplastic.